We begin with the raw amino-acid sequence, 892 residues long: Alanine--tRNA ligase (892 aa).

4 residues coordinate Zn(2+): His596, His600, Cys700, and His704.

The protein belongs to the class-II aminoacyl-tRNA synthetase family. Requires Zn(2+) as cofactor.

The protein resides in the cytoplasm. The catalysed reaction is tRNA(Ala) + L-alanine + ATP = L-alanyl-tRNA(Ala) + AMP + diphosphate. Its function is as follows. Catalyzes the attachment of alanine to tRNA(Ala) in a two-step reaction: alanine is first activated by ATP to form Ala-AMP and then transferred to the acceptor end of tRNA(Ala). Also edits incorrectly charged Ser-tRNA(Ala) and Gly-tRNA(Ala) via its editing domain. This is Alanine--tRNA ligase from Methanococcus maripaludis (strain C7 / ATCC BAA-1331).